The sequence spans 106 residues: uncharacterized protein (106 aa).

Helical transmembrane passes span 46–68 (LLQEIILFVFCALMVVSAAILAF) and 73–92 (AVFIVLQVCVLAVLPILIAA).

Its subcellular location is the cell membrane. This is an uncharacterized protein from Bacillus subtilis (strain 168).